Reading from the N-terminus, the 307-residue chain is Acyl transferase (307 aa).

Active-site charge relay system residues include S116, D213, and H243.

It belongs to the LuxD family.

It participates in lipid metabolism; fatty acid reduction for biolumincescence. In terms of biological role, acyl transferase is part of the fatty acid reductase system required for aldehyde biosynthesis; it produces fatty acids for the luminescent reaction. The sequence is that of Acyl transferase from Photorhabdus luminescens (Xenorhabdus luminescens).